The sequence spans 380 residues: UDP-N-acetylglucosamine--N-acetylmuramyl-(pentapeptide) pyrophosphoryl-undecaprenol N-acetylglucosamine transferase (380 aa).

UDP-N-acetyl-alpha-D-glucosamine contacts are provided by residues 23 to 25 (TGG), asparagine 137, arginine 178, serine 210, isoleucine 266, and glutamine 311.

Belongs to the glycosyltransferase 28 family. MurG subfamily.

The protein localises to the cell inner membrane. It carries out the reaction di-trans,octa-cis-undecaprenyl diphospho-N-acetyl-alpha-D-muramoyl-L-alanyl-D-glutamyl-meso-2,6-diaminopimeloyl-D-alanyl-D-alanine + UDP-N-acetyl-alpha-D-glucosamine = di-trans,octa-cis-undecaprenyl diphospho-[N-acetyl-alpha-D-glucosaminyl-(1-&gt;4)]-N-acetyl-alpha-D-muramoyl-L-alanyl-D-glutamyl-meso-2,6-diaminopimeloyl-D-alanyl-D-alanine + UDP + H(+). It participates in cell wall biogenesis; peptidoglycan biosynthesis. Cell wall formation. Catalyzes the transfer of a GlcNAc subunit on undecaprenyl-pyrophosphoryl-MurNAc-pentapeptide (lipid intermediate I) to form undecaprenyl-pyrophosphoryl-MurNAc-(pentapeptide)GlcNAc (lipid intermediate II). The protein is UDP-N-acetylglucosamine--N-acetylmuramyl-(pentapeptide) pyrophosphoryl-undecaprenol N-acetylglucosamine transferase of Bacteroides fragilis (strain ATCC 25285 / DSM 2151 / CCUG 4856 / JCM 11019 / LMG 10263 / NCTC 9343 / Onslow / VPI 2553 / EN-2).